We begin with the raw amino-acid sequence, 206 residues long: Small ribosomal subunit protein uS4A (206 aa).

The S4 RNA-binding domain occupies 98-164 (LRLDNVAYKL…EKFKTFAENP (67 aa)).

The protein belongs to the universal ribosomal protein uS4 family. Part of the 30S ribosomal subunit. Contacts protein S5. The interaction surface between S4 and S5 is involved in control of translational fidelity.

Functionally, one of the primary rRNA binding proteins, it binds directly to 16S rRNA where it nucleates assembly of the body of the 30S subunit. With S5 and S12 plays an important role in translational accuracy. This chain is Small ribosomal subunit protein uS4A (rspD1), found in Clostridium acetobutylicum (strain ATCC 824 / DSM 792 / JCM 1419 / IAM 19013 / LMG 5710 / NBRC 13948 / NRRL B-527 / VKM B-1787 / 2291 / W).